The sequence spans 247 residues: Probable transcriptional regulatory protein ABO_0750 (247 aa).

Belongs to the TACO1 family.

It is found in the cytoplasm. The polypeptide is Probable transcriptional regulatory protein ABO_0750 (Alcanivorax borkumensis (strain ATCC 700651 / DSM 11573 / NCIMB 13689 / SK2)).